Here is a 289-residue protein sequence, read N- to C-terminus: Rhodopsin (289 aa).

The Extracellular portion of the chain corresponds to 1-7 (YLVNPAG). Residues 8–32 (YAALGAYMFLLILIGSPVNFLTLYV) form a helical membrane-spanning segment. Residues 33 to 44 (TLEHKKLRTPLN) lie on the Cytoplasmic side of the membrane. The chain crosses the membrane as a helical span at residues 45–67 (YILLNLAVADLFMVLGGFTTTMY). The Extracellular segment spans residues 68-81 (TSMHGYSVLGRLGC). The cysteines at positions 81 and 158 are disulfide-linked. Residues 82 to 104 (ILEGFFATLGGEIALWSLVVLAI) form a helical membrane-spanning segment. Positions 105–107 (ERW) match the 'Ionic lock' involved in activated form stabilization motif. The Cytoplasmic segment spans residues 105–123 (ERWIVVCKPISNFRFTEDH). The chain crosses the membrane as a helical span at residues 124 to 144 (AIMGLAFSWVMALACAVPPLV). At 145–173 (GWSRYIPEGMQCSCGVDYYTRAEGFNNES) the chain is on the extracellular side. Asn-171 carries an N-linked (GlcNAc...) asparagine glycan. Residues 174–195 (FVIYMFIVHFLIPLSVIFFCYG) form a helical membrane-spanning segment. Residues 196 to 223 (RLLCAVKEAAAAQQESETTQRPEKEVTR) are Cytoplasmic-facing. Residues 224–245 (MVVIMVIAFLVCCLPNASVAWW) form a helical membrane-spanning segment. Topologically, residues 246–257 (IFCNQGSDFGPI) are extracellular. Residues 258-279 (FMTLPSFFAKSAAIYNPMIYIC) form a helical membrane-spanning segment. Lys-267 is modified (N6-(retinylidene)lysine). Residues 280 to 289 (MNKQFRHCMI) are Cytoplasmic-facing.

It belongs to the G-protein coupled receptor 1 family. Opsin subfamily. Phosphorylated on some or all of the serine and threonine residues present in the C-terminal region. In terms of processing, contains one covalently linked retinal chromophore.

The protein localises to the membrane. Its subcellular location is the cell projection. It is found in the cilium. It localises to the photoreceptor outer segment. Functionally, photoreceptor required for image-forming vision at low light intensity. While most salt water fish species use retinal as chromophore, most freshwater fish use 3-dehydroretinal, or a mixture of retinal and 3-dehydroretinal. Light-induced isomerization of 11-cis to all-trans retinal triggers a conformational change that activates signaling via G-proteins. Subsequent receptor phosphorylation mediates displacement of the bound G-protein alpha subunit by arrestin and terminates signaling. In Limnocottus bergianus, this protein is Rhodopsin (rho).